The sequence spans 182 residues: MMNNKNKFKNKEWKFSKKQVQLIYLTSSIISGLFLGLALLSTYLIAGLPNDNAFVLFVKEQKFYFPFFMTIGFINLIISMLTLLPTLKTLWRTVAKMHQYGDLSKEEFEALDILVEQIRNRYISVENIKAVISSNNYKTLDEELKKLEQQEKQLKIQEQEQKVKRLEQEIIKDDKTRVQSDY.

2 helical membrane-spanning segments follow: residues 29 to 49 and 63 to 83; these read IISG…AGLP and FYFP…MLTL.

The protein localises to the cell membrane. This is an uncharacterized protein from Ureaplasma parvum serovar 3 (strain ATCC 700970).